The sequence spans 343 residues: Heat-inducible transcription repressor HrcA (343 aa).

Belongs to the HrcA family.

In terms of biological role, negative regulator of class I heat shock genes (grpE-dnaK-dnaJ and groELS operons). Prevents heat-shock induction of these operons. This is Heat-inducible transcription repressor HrcA from Clostridium botulinum (strain Alaska E43 / Type E3).